A 296-amino-acid chain; its full sequence is Formamidopyrimidine-DNA glycosylase (296 aa).

The active-site Schiff-base intermediate with DNA is Pro-2. The active-site Proton donor is the Glu-3. Lys-58 functions as the Proton donor; for beta-elimination activity in the catalytic mechanism. Residues His-106, Arg-125, and Lys-168 each coordinate DNA. The segment at 259-295 adopts an FPG-type zinc-finger fold; sequence RVYDRVGHACPTKGCTGRIGRIVQGGRSTFFCETCQV. Arg-285 acts as the Proton donor; for delta-elimination activity in catalysis.

This sequence belongs to the FPG family. In terms of assembly, monomer. Zn(2+) serves as cofactor.

It carries out the reaction Hydrolysis of DNA containing ring-opened 7-methylguanine residues, releasing 2,6-diamino-4-hydroxy-5-(N-methyl)formamidopyrimidine.. The enzyme catalyses 2'-deoxyribonucleotide-(2'-deoxyribose 5'-phosphate)-2'-deoxyribonucleotide-DNA = a 3'-end 2'-deoxyribonucleotide-(2,3-dehydro-2,3-deoxyribose 5'-phosphate)-DNA + a 5'-end 5'-phospho-2'-deoxyribonucleoside-DNA + H(+). In terms of biological role, involved in base excision repair of DNA damaged by oxidation or by mutagenic agents. Acts as a DNA glycosylase that recognizes and removes damaged bases. Has a preference for oxidized purines, such as 7,8-dihydro-8-oxoguanine (8-oxoG). Has AP (apurinic/apyrimidinic) lyase activity and introduces nicks in the DNA strand. Cleaves the DNA backbone by beta-delta elimination to generate a single-strand break at the site of the removed base with both 3'- and 5'-phosphates. This is Formamidopyrimidine-DNA glycosylase from Methylorubrum populi (strain ATCC BAA-705 / NCIMB 13946 / BJ001) (Methylobacterium populi).